The chain runs to 644 residues: Exoribonuclease 2 (644 aa).

Positions 189-516 constitute an RNB domain; it reads REDLTALNFV…NHRLLKAIIA (328 aa). The region spanning 561-643 is the S1 motif domain; that stretch reads DERFNAEIID…ETRSVIARPA (83 aa).

This sequence belongs to the RNR ribonuclease family. RNase II subfamily.

The protein localises to the cytoplasm. The enzyme catalyses Exonucleolytic cleavage in the 3'- to 5'-direction to yield nucleoside 5'-phosphates.. In terms of biological role, involved in mRNA degradation. Hydrolyzes single-stranded polyribonucleotides processively in the 3' to 5' direction. The sequence is that of Exoribonuclease 2 from Serratia proteamaculans (strain 568).